A 337-amino-acid chain; its full sequence is uncharacterized protein (337 aa).

It belongs to the mimivirus R69 family.

This is an uncharacterized protein from Acanthamoeba polyphaga mimivirus (APMV).